The sequence spans 137 residues: Oleosin Ara h 11.0102 (137 aa).

Ala2 carries the N-acetylalanine; alternate modification. 2 helical membrane passes run 27-47 (AVVAGGSLLILAGLVLAATVI) and 55-75 (LFVIFSPVLVPAVITVALLGL).

The protein belongs to the oleosin family. Expressed in seeds (at protein level).

Its subcellular location is the lipid droplet. It localises to the membrane. In terms of biological role, may have a structural role to stabilize the lipid body during desiccation of the seed by preventing coalescence of the oil. Probably interacts with both lipid and phospholipid moieties of lipid bodies. May also provide recognition signals for specific lipase anchorage in lipolysis during seedling growth. The polypeptide is Oleosin Ara h 11.0102 (Arachis hypogaea (Peanut)).